Reading from the N-terminus, the 300-residue chain is Cation-efflux pump FieF (300 aa).

The next 4 helical transmembrane spans lie at 12 to 32 (AALAATLVATLLLIIKIFAWW), 39 to 59 (ILAALVDSLVDIAASLTNLLV), 82 to 102 (AALAQSMFISGSALFLFLTGI), and 114 to 134 (PLVGIVVTVAALVTTLMLVTF). Zn(2+) is bound by residues aspartate 45 and aspartate 49. Histidine 153 and aspartate 157 together coordinate Zn(2+). The next 2 helical transmembrane spans lie at 156–176 (SDVMMNGAILVALALSWYGLH) and 182–202 (FALGIGVWILYSALRMGYEAI).

The protein belongs to the cation diffusion facilitator (CDF) transporter (TC 2.A.4) family. FieF subfamily. In terms of assembly, homodimer.

It localises to the cell inner membrane. It catalyses the reaction Zn(2+)(in) + H(+)(out) = Zn(2+)(out) + H(+)(in). The enzyme catalyses Cd(2+)(in) + H(+)(out) = Cd(2+)(out) + H(+)(in). The catalysed reaction is Fe(2+)(in) + H(+)(out) = Fe(2+)(out) + H(+)(in). Divalent metal cation transporter which exports Zn(2+), Cd(2+) and possibly Fe(2+). May be involved in zinc and iron detoxification by efflux. This Cronobacter sakazakii (strain ATCC BAA-894) (Enterobacter sakazakii) protein is Cation-efflux pump FieF.